Here is a 297-residue protein sequence, read N- to C-terminus: NADPH-dependent 1-acyldihydroxyacetone phosphate reductase (297 aa).

A GXSXG motif is present at residues 16–20; sequence GASGG. Ser-18 (nucleophile; for lipase activity) is an active-site residue. The NADP(+) site is built by Ile-21, Asp-64, Asn-93, Arg-126, Tyr-157, Lys-161, Val-190, and Thr-192. The Proton acceptor role is filled by Tyr-157. The Lowers pKa of active site Tyr role is filled by Lys-161.

It belongs to the short-chain dehydrogenases/reductases (SDR) family.

Its subcellular location is the lipid droplet. It is found in the mitochondrion outer membrane. The protein resides in the endoplasmic reticulum. It carries out the reaction a 1-acylglycerone 3-phosphate + NADPH + H(+) = a 1-acyl-sn-glycero-3-phosphate + NADP(+). It catalyses the reaction 1-hexadecanoyl-sn-glycero-3-phosphate + NADP(+) = 1-hexadecanoylglycerone 3-phosphate + NADPH + H(+). The enzyme catalyses a triacylglycerol + H2O = a diacylglycerol + a fatty acid + H(+). The catalysed reaction is 1,2,3-tri-(9Z-octadecenoyl)-glycerol + H2O = di-(9Z)-octadecenoylglycerol + (9Z)-octadecenoate + H(+). Its activity is regulated as follows. Inhibited by divalent cations and N-ethylmaleimide. Activity is reduced under anaerobic growth conditions. Functionally, can convert acyl and alkyl dihydroxyacetone-phosphate (DHAP) into glycerolipids and ether lipids, respectively. Required for the biosynthesis of phosphatidic acid via the DHAP pathway, where it reduces 1-acyl DHAP to lysophosphatidic acid (LPA). Also has triacylglycerol (TAG) lipase activity. Involved in the mobilization of the non-polar storage lipids triacylglycerols (TAGs) from lipid particles by hydrolysis of TAGs. Required for spore germination. Plays a role in cell wall biogenesis, but this effect may be indirect by affecting the activities of cell wall synthesis enzymes. Lipolysis of TAG by AYR1 is essential for starvation-induced autophagy. Forms an NADPH-regulated cation-selective channel in the mitochondrial outer membrane. This Saccharomyces cerevisiae (strain ATCC 204508 / S288c) (Baker's yeast) protein is NADPH-dependent 1-acyldihydroxyacetone phosphate reductase.